Consider the following 139-residue polypeptide: D-ribose pyranase (139 aa).

Residue His-20 is the Proton donor of the active site. Substrate is bound by residues Asp-28, His-106, and 128-130 (YAN).

The protein belongs to the RbsD / FucU family. RbsD subfamily. Homodecamer.

Its subcellular location is the cytoplasm. It catalyses the reaction beta-D-ribopyranose = beta-D-ribofuranose. It functions in the pathway carbohydrate metabolism; D-ribose degradation; D-ribose 5-phosphate from beta-D-ribopyranose: step 1/2. Catalyzes the interconversion of beta-pyran and beta-furan forms of D-ribose. This is D-ribose pyranase from Pectobacterium carotovorum subsp. carotovorum (strain PC1).